The primary structure comprises 155 residues: Small ribosomal subunit protein uS7cz/uS7cy (155 aa).

This sequence belongs to the universal ribosomal protein uS7 family. Part of the 30S ribosomal subunit.

The protein resides in the plastid. Its subcellular location is the chloroplast. Functionally, one of the primary rRNA binding proteins, it binds directly to 16S rRNA where it nucleates assembly of the head domain of the 30S subunit. In Crucihimalaya wallichii (Rock-cress), this protein is Small ribosomal subunit protein uS7cz/uS7cy (rps7-A).